The primary structure comprises 964 residues: Protein translocase subunit SecA (964 aa).

ATP is bound by residues Gln-86, Gly-104 to Thr-108, and Asp-494. The disordered stretch occupies residues Ala-848–Lys-964. Residues Ala-871–Thr-882 show a composition bias toward acidic residues. Over residues Ala-889–Ser-900 the composition is skewed to low complexity. Cys-947, Cys-949, Cys-958, and His-959 together coordinate Zn(2+).

Belongs to the SecA family. In terms of assembly, monomer and homodimer. Part of the essential Sec protein translocation apparatus which comprises SecA, SecYEG and auxiliary proteins SecDF. Other proteins may also be involved. Zn(2+) is required as a cofactor.

It is found in the cell membrane. The protein resides in the cytoplasm. It carries out the reaction ATP + H2O + cellular proteinSide 1 = ADP + phosphate + cellular proteinSide 2.. Part of the Sec protein translocase complex. Interacts with the SecYEG preprotein conducting channel. Has a central role in coupling the hydrolysis of ATP to the transfer of proteins into and across the cell membrane, serving as an ATP-driven molecular motor driving the stepwise translocation of polypeptide chains across the membrane. This Bifidobacterium longum (strain NCC 2705) protein is Protein translocase subunit SecA.